A 255-amino-acid chain; its full sequence is Tablysin 15 (255 aa).

The N-terminal stretch at 1 to 23 (MTSIPVSSFLLAALVLQYATSDA) is a signal peptide. 3 disulfides stabilise this stretch: Cys-27/Cys-40, Cys-31/Cys-117, and Cys-49/Cys-110. A Cell attachment site motif is present at residues 32 to 34 (RGD). Residues 67–211 (LSKINDVRDH…KARALLTCNF (145 aa)) form the SCP domain. Leukotriene E4 is bound by residues Trp-82, His-153, and Lys-156. Cystine bridges form between Cys-192–Cys-209 and Cys-232–Cys-243.

The protein belongs to the CRISP family. Expressed in salivary glands.

The protein localises to the secreted. Anti-inflammatory scavenger of eicosanoids and antithrombotic protein that inhibits platelets aggregation induced by collagen, ADP and convulxin (GPVI agonist). Exhibits high affinity binding for glycoprotein IIb-IIIa receptor (ITGA2B/ITGB3) and endothelial cell alphaVbeta3 (ITGAV/ITGB3) integrins, but not for alpha-5/beta-1 or alpha-2/beta-1. Accordingly, it blocks endothelial cell adhesion to vitronectin (IC(50)~1 nM) and marginally to fibronectin (IC(50)~1 uM), but not to collagen. It also inhibits fibroblast growth factor (FGF)-induced endothelial cell proliferation, and attenuates tube formation in vitro. In addition, it dose-dependently attenuates thrombus formation to collagen under flow. Also binds proinflammatory cysteinyl leukotrienes (leukotrienes C4 (LTC4), D4 (LTD4) and E4 (LTE4)) with submicromolar affinities. This is Tablysin 15 from Tabanus yao (Horsefly).